The following is a 248-amino-acid chain: 1-(5-phosphoribosyl)-5-[(5-phosphoribosylamino)methylideneamino] imidazole-4-carboxamide isomerase (248 aa).

Residue Asp8 is the Proton acceptor of the active site. Asp131 serves as the catalytic Proton donor.

The protein belongs to the HisA/HisF family.

The protein localises to the cytoplasm. It carries out the reaction 1-(5-phospho-beta-D-ribosyl)-5-[(5-phospho-beta-D-ribosylamino)methylideneamino]imidazole-4-carboxamide = 5-[(5-phospho-1-deoxy-D-ribulos-1-ylimino)methylamino]-1-(5-phospho-beta-D-ribosyl)imidazole-4-carboxamide. The protein operates within amino-acid biosynthesis; L-histidine biosynthesis; L-histidine from 5-phospho-alpha-D-ribose 1-diphosphate: step 4/9. The chain is 1-(5-phosphoribosyl)-5-[(5-phosphoribosylamino)methylideneamino] imidazole-4-carboxamide isomerase from Cupriavidus taiwanensis (strain DSM 17343 / BCRC 17206 / CCUG 44338 / CIP 107171 / LMG 19424 / R1) (Ralstonia taiwanensis (strain LMG 19424)).